We begin with the raw amino-acid sequence, 216 residues long: Trimethylamine corrinoid protein 1 (216 aa).

Residues 1 to 92 enclose the B12-binding N-terminal domain; it reads MANKEEIIAK…EMEKRKSQTK (92 aa). The region spanning 94–216 is the B12-binding domain; it reads LGTIVIGTIE…VVSKVKAALL (123 aa). Residue His107 participates in methylcob(III)alamin binding.

It belongs to the methylamine corrinoid protein family. As to quaternary structure, can form a complex with MttB.

The protein operates within one-carbon metabolism; methanogenesis from trimethylamine. Acts probably as a methyl group carrier between MttB and either MtbA or MtaA. The sequence is that of Trimethylamine corrinoid protein 1 (mttC1) from Methanosarcina mazei (strain ATCC BAA-159 / DSM 3647 / Goe1 / Go1 / JCM 11833 / OCM 88) (Methanosarcina frisia).